Reading from the N-terminus, the 507-residue chain is Cystathionine beta-synthase (507 aa).

Lys53 carries the post-translational modification N6-(pyridoxal phosphate)lysine. Asn84 is a pyridoxal 5'-phosphate binding site. Phosphoserine is present on Ser134. Residues 196-200 (GTGGT) and Ser289 contribute to the pyridoxal 5'-phosphate site. Phosphoserine occurs at positions 350 and 424. The CBS domain maps to 373–432 (HLKPVVSVKETAKVTDVIKILKDNGFDQLPVLTEDGKLSGLVTLSELLRKLSINNSNNDN).

It belongs to the cysteine synthase/cystathionine beta-synthase family. Requires pyridoxal 5'-phosphate as cofactor.

It carries out the reaction L-homocysteine + L-serine = L,L-cystathionine + H2O. It participates in amino-acid biosynthesis; L-cysteine biosynthesis; L-cysteine from L-homocysteine and L-serine: step 1/2. This Saccharomyces cerevisiae (strain ATCC 204508 / S288c) (Baker's yeast) protein is Cystathionine beta-synthase (CYS4).